Here is an 80-residue protein sequence, read N- to C-terminus: UPF0154 protein SH1564 (80 aa).

A helical membrane pass occupies residues 4–24 (WLAILLIIVALIGGLVGGFFL).

Belongs to the UPF0154 family.

The protein localises to the membrane. This is UPF0154 protein SH1564 from Staphylococcus haemolyticus (strain JCSC1435).